A 159-amino-acid polypeptide reads, in one-letter code: Endoribonuclease YbeY (159 aa).

H122, H126, and H132 together coordinate Zn(2+).

It belongs to the endoribonuclease YbeY family. Requires Zn(2+) as cofactor.

Its subcellular location is the cytoplasm. In terms of biological role, single strand-specific metallo-endoribonuclease involved in late-stage 70S ribosome quality control and in maturation of the 3' terminus of the 16S rRNA. This is Endoribonuclease YbeY from Roseiflexus castenholzii (strain DSM 13941 / HLO8).